Reading from the N-terminus, the 80-residue chain is ATP synthase subunit c (80 aa).

The next 2 membrane-spanning stretches (helical) occupy residues 11–31 and 53–73; these read MAAA…IGIL and FFVV…LGLY.

This sequence belongs to the ATPase C chain family. In terms of assembly, F-type ATPases have 2 components, F(1) - the catalytic core - and F(0) - the membrane proton channel. F(1) has five subunits: alpha(3), beta(3), gamma(1), delta(1), epsilon(1). F(0) has three main subunits: a(1), b(2) and c(10-14). The alpha and beta chains form an alternating ring which encloses part of the gamma chain. F(1) is attached to F(0) by a central stalk formed by the gamma and epsilon chains, while a peripheral stalk is formed by the delta and b chains.

It localises to the cell inner membrane. F(1)F(0) ATP synthase produces ATP from ADP in the presence of a proton or sodium gradient. F-type ATPases consist of two structural domains, F(1) containing the extramembraneous catalytic core and F(0) containing the membrane proton channel, linked together by a central stalk and a peripheral stalk. During catalysis, ATP synthesis in the catalytic domain of F(1) is coupled via a rotary mechanism of the central stalk subunits to proton translocation. Its function is as follows. Key component of the F(0) channel; it plays a direct role in translocation across the membrane. A homomeric c-ring of between 10-14 subunits forms the central stalk rotor element with the F(1) delta and epsilon subunits. In Erwinia tasmaniensis (strain DSM 17950 / CFBP 7177 / CIP 109463 / NCPPB 4357 / Et1/99), this protein is ATP synthase subunit c.